A 721-amino-acid chain; its full sequence is 1,4-alpha-glucan branching enzyme GlgB (721 aa).

The Nucleophile role is filled by Asp404. Glu457 serves as the catalytic Proton donor.

This sequence belongs to the glycosyl hydrolase 13 family. GlgB subfamily. As to quaternary structure, monomer.

It catalyses the reaction Transfers a segment of a (1-&gt;4)-alpha-D-glucan chain to a primary hydroxy group in a similar glucan chain.. It participates in glycan biosynthesis; glycogen biosynthesis. In terms of biological role, catalyzes the formation of the alpha-1,6-glucosidic linkages in glycogen by scission of a 1,4-alpha-linked oligosaccharide from growing alpha-1,4-glucan chains and the subsequent attachment of the oligosaccharide to the alpha-1,6 position. The protein is 1,4-alpha-glucan branching enzyme GlgB of Novosphingobium aromaticivorans (strain ATCC 700278 / DSM 12444 / CCUG 56034 / CIP 105152 / NBRC 16084 / F199).